Here is a 286-residue protein sequence, read N- to C-terminus: Pantothenate synthetase (286 aa).

30 to 37 (MGALHEGH) contacts ATP. Catalysis depends on histidine 37, which acts as the Proton donor. Glutamine 61 is a binding site for (R)-pantoate. Residue glutamine 61 coordinates beta-alanine. 147 to 150 (GEKD) lines the ATP pocket. Glutamine 153 provides a ligand contact to (R)-pantoate. ATP-binding positions include valine 180 and 188-191 (LSSR).

This sequence belongs to the pantothenate synthetase family. As to quaternary structure, homodimer.

It localises to the cytoplasm. The catalysed reaction is (R)-pantoate + beta-alanine + ATP = (R)-pantothenate + AMP + diphosphate + H(+). The protein operates within cofactor biosynthesis; (R)-pantothenate biosynthesis; (R)-pantothenate from (R)-pantoate and beta-alanine: step 1/1. In terms of biological role, catalyzes the condensation of pantoate with beta-alanine in an ATP-dependent reaction via a pantoyl-adenylate intermediate. The sequence is that of Pantothenate synthetase from Novosphingobium aromaticivorans (strain ATCC 700278 / DSM 12444 / CCUG 56034 / CIP 105152 / NBRC 16084 / F199).